Here is a 20-residue protein sequence, read N- to C-terminus: Dihydroorotase-like protein (20 aa).

It belongs to the metallo-dependent hydrolases superfamily. DHOase family. PyrC' subfamily. In terms of assembly, heterododecamer of 6 active PyrB subunits and 6 non-catalytic PyrC' subunits.

In terms of biological role, non-functional DHOase. This is Dihydroorotase-like protein (pyrC') from Pseudomonas fluorescens biotype A.